The following is a 55-amino-acid chain: Potassium channel toxin alpha-KTx 17.1 (55 aa).

The N-terminal stretch at Met-1–Ala-23 is a signal peptide. Pyrrolidone carboxylic acid is present on Gln-24. 3 disulfides stabilise this stretch: Cys-27–Cys-43, Cys-33–Cys-48, and Cys-37–Cys-50. Thr-53 bears the Threonine amide mark.

It belongs to the short scorpion toxin superfamily. Potassium channel inhibitor family. Alpha-KTx 17 subfamily. As to expression, expressed by the venom gland.

It is found in the secreted. In terms of biological role, blocker of potassium channels, which inhibits both the delayed rectifier and fast transient potassium current. The inhibition is reversible and voltage-independent. It causes a depolarizing shift of the steady-state activation curve of the currents, without changing their steady-state inactivation behavior. The chain is Potassium channel toxin alpha-KTx 17.1 from Olivierus martensii (Manchurian scorpion).